The following is a 579-amino-acid chain: Adipocyte plasma membrane-associated protein Hemomucin (579 aa).

Over M1–A6 the chain is Cytoplasmic. Residues L7 to P29 form a helical membrane-spanning segment. The Extracellular segment spans residues R30–L579. N-linked (GlcNAc...) asparagine glycans are attached at residues N213 and N217. Residues G427–L579 form a disordered region. The span at P435–T529 shows a compositional bias: low complexity.

This sequence belongs to the strictosidine synthase family. In terms of assembly, interacts with sturkopf. O-glycosylated. Glycosylated in the ovary of 4 day old females. Post-translationally, phosphorylated. In terms of tissue distribution, detected in ovaries (at protein level). In larvae, detected in the fat body, salivary glands, imaginal disks and gut (at protein level). In adults, expressed in the cardia, and in regions of the ventriculus including the area posterior to the cardia. In females also expressed in follicle cells.

It localises to the cell membrane. Transmembrane mucin that may be involved in cellular adhesion and the innate immune response. Membrane-tethered mucins are involved in many cell surface functions and form a physical barrier around cells to regulate cell-cell and/or cell-substrate interactions, and protect against pathogens or harmful extracellular conditions. This mucin likely acts in hemocyte adhesion as it is released from hemocytes during coagulation and is also able to bind lipophorin particles which form part of the hemocyte coagulogen. Able to induce expression of the antibacterial proteins in the presence of GalNAc-specific lectins and so probably also functions in the innate immune response. This chain is Adipocyte plasma membrane-associated protein Hemomucin, found in Drosophila melanogaster (Fruit fly).